A 306-amino-acid polypeptide reads, in one-letter code: MNWITNYVRPKINSILGRREIPENLWIKDPTSGEMVFHKDLEVNQYVIPSSGYHMRISAKNRLTHFFDDGVYTPLENPKVVIDPLKFRDEKRYIDRLKDYRSKLGIDDNILSARGTIEGLPIIATVQDFAFMGGSLGMASGEAIIKAFDTAIAEKCPLVLFSASGGARMQEGTLSLMQMPRTTVAIEMLKEAKLPYIVVLTNPTTGGVTASYAMLGDIHIAEPGAMIGFAGPRVIQQTIRETLPEGFQSSEYLLKHGMIDMVVSRLEMKTTIARLLRLMMKYPPVVNPSNTSSTNSQASLSKAEAA.

One can recognise a CoA carboxyltransferase N-terminal domain in the interval 25–294 (LWIKDPTSGE…VVNPSNTSST (270 aa)). Residues 287–296 (NPSNTSSTNS) show a composition bias toward low complexity. The interval 287–306 (NPSNTSSTNSQASLSKAEAA) is disordered.

Belongs to the AccD/PCCB family. As to quaternary structure, acetyl-CoA carboxylase is a heterohexamer composed of biotin carboxyl carrier protein (AccB), biotin carboxylase (AccC) and two subunits each of ACCase subunit alpha (AccA) and ACCase subunit beta (AccD).

Its subcellular location is the cytoplasm. The catalysed reaction is N(6)-carboxybiotinyl-L-lysyl-[protein] + acetyl-CoA = N(6)-biotinyl-L-lysyl-[protein] + malonyl-CoA. Its pathway is lipid metabolism; malonyl-CoA biosynthesis; malonyl-CoA from acetyl-CoA: step 1/1. Functionally, component of the acetyl coenzyme A carboxylase (ACC) complex. Biotin carboxylase (BC) catalyzes the carboxylation of biotin on its carrier protein (BCCP) and then the CO(2) group is transferred by the transcarboxylase to acetyl-CoA to form malonyl-CoA. The protein is Acetyl-coenzyme A carboxylase carboxyl transferase subunit beta of Bartonella henselae (strain ATCC 49882 / DSM 28221 / CCUG 30454 / Houston 1) (Rochalimaea henselae).